A 408-amino-acid polypeptide reads, in one-letter code: Hepatocyte nuclear factor 4-gamma (408 aa).

The segment at residues 9-84 (NCLCAICGDR…AGMKKEAVQN (76 aa)) is a DNA-binding region (nuclear receptor). NR C4-type zinc fingers lie at residues 12–32 (CAICGDRATGKHYGASSCDGC) and 48–72 (CRFSRQCVVDKDKRNQCRYCRLRKC). Phosphoserine is present on serine 94. The 230-residue stretch at 99-328 (SNIPSINTLA…NLLQEMLLGG (230 aa)) folds into the NR LBD domain. The interval 368-390 (ISTPETPLPSPPQGSGQEQYKIA) is disordered. A phosphothreonine mark is found at threonine 370 and threonine 373. Serine 377 carries the phosphoserine modification.

It belongs to the nuclear hormone receptor family. NR2 subfamily. Expressed in pancreas, kidney, small intestine and testis. Weakly expressed in colon. Not expressed in liver, skeletal muscle, lung, placenta, brain, heart, peripheral blood, ovary, prostate, thymus and spleen.

The protein localises to the nucleus. Its function is as follows. Transcription factor. Has a lower transcription activation potential than HNF4-alpha. This chain is Hepatocyte nuclear factor 4-gamma (HNF4G), found in Homo sapiens (Human).